The chain runs to 241 residues: TKQVEKNEDGDQKIEQDGIKPEDKAHKAATKIQASFRGHITRKKLKGEKKGDAPASETDAADKKEEGPAGGAAENKESEAPAATEAAAADSAQQEEGSKDSSAPAEEKKGDGAADTGSEQPAPQAATPAASSEEKTAAAAAPERESTPKASTDNSPSLKADEAQDKEEPKQADVPAADTTATTTPAAEDATAKATAQPQMETVESSQTEEKTDAVEETKPTESAQQEEMKEEESKADQENA.

Residues threonine 1 to histidine 26 show a composition bias toward basic and acidic residues. The interval threonine 1–alanine 241 is disordered. The 30-residue stretch at alanine 25–proline 54 folds into the IQ domain. 2 stretches are compositionally biased toward low complexity: residues alanine 80–glutamate 95 and serine 118–serine 131. Composition is skewed to basic and acidic residues over residues serine 132 to threonine 147 and lysine 159 to glutamine 171. The span at alanine 172–proline 198 shows a compositional bias: low complexity. 2 stretches are compositionally biased toward basic and acidic residues: residues threonine 208 to proline 220 and glutamate 232 to alanine 241.

It belongs to the neuromodulin family. As to quaternary structure, binds calmodulin with a greater affinity in the absence of Ca(2+) than in its presence. Palmitoylated. Palmitoylation is essential for plasma membrane association.

It is found in the cell membrane. The protein localises to the cell projection. The protein resides in the growth cone membrane. It localises to the synapse. Its subcellular location is the filopodium membrane. This protein is associated with nerve growth. It is a major component of the motile 'growth cones' that form the tips of elongating axons. Plays a role in axonal and dendritic filopodia induction. In Serinus canaria (Island canary), this protein is Neuromodulin (GAP43).